Reading from the N-terminus, the 143-residue chain is FAD synthase (143 aa).

ATP-binding positions include 10–11 (TF), 15–18 (HPGH), and D93.

It belongs to the archaeal FAD synthase family. As to quaternary structure, homodimer. A divalent metal cation serves as cofactor.

It carries out the reaction FMN + ATP + H(+) = FAD + diphosphate. It functions in the pathway cofactor biosynthesis; FAD biosynthesis; FAD from FMN: step 1/1. Functionally, catalyzes the transfer of the AMP portion of ATP to flavin mononucleotide (FMN) to produce flavin adenine dinucleotide (FAD) coenzyme. The protein is FAD synthase of Haloterrigena turkmenica (strain ATCC 51198 / DSM 5511 / JCM 9101 / NCIMB 13204 / VKM B-1734 / 4k) (Halococcus turkmenicus).